The primary structure comprises 231 residues: Probable transglycosylase SceD (231 aa).

An N-terminal signal peptide occupies residues 1-27; that stretch reads MKKTLLASSLAVGLGIVAGNAGHEAHA. Positions 93–116 are enriched in polar residues; that stretch reads SAQAPATNNVEPSAVQANQVQSQE. The disordered stretch occupies residues 93 to 152; it reads SAQAPATNNVEPSAVQANQVQSQEVEAPQNAQTQQPQASTSNNSQVTATPTESKASEGSS. Low complexity predominate over residues 119 to 137; sequence APQNAQTQQPQASTSNNSQ. The segment covering 138–152 has biased composition (polar residues); sequence VTATPTESKASEGSS.

This sequence belongs to the transglycosylase family. SceD subfamily.

It localises to the secreted. Its function is as follows. Is able to cleave peptidoglycan and affects clumping and separation of bacterial cells. This Staphylococcus aureus (strain Mu3 / ATCC 700698) protein is Probable transglycosylase SceD (sceD).